A 378-amino-acid polypeptide reads, in one-letter code: Queuine tRNA-ribosyltransferase (378 aa).

D89 acts as the Proton acceptor in catalysis. Residues 89–93, D143, Q187, and G214 contribute to the substrate site; that span reads DSGGF. Positions 245 to 251 are RNA binding; sequence GVGKPED. D264 serves as the catalytic Nucleophile. The segment at 269–273 is RNA binding; important for wobble base 34 recognition; sequence TRNAR. Residues C302, C304, C307, and H333 each contribute to the Zn(2+) site.

This sequence belongs to the queuine tRNA-ribosyltransferase family. As to quaternary structure, homodimer. Within each dimer, one monomer is responsible for RNA recognition and catalysis, while the other monomer binds to the replacement base PreQ1. It depends on Zn(2+) as a cofactor.

The enzyme catalyses 7-aminomethyl-7-carbaguanine + guanosine(34) in tRNA = 7-aminomethyl-7-carbaguanosine(34) in tRNA + guanine. It participates in tRNA modification; tRNA-queuosine biosynthesis. Catalyzes the base-exchange of a guanine (G) residue with the queuine precursor 7-aminomethyl-7-deazaguanine (PreQ1) at position 34 (anticodon wobble position) in tRNAs with GU(N) anticodons (tRNA-Asp, -Asn, -His and -Tyr). Catalysis occurs through a double-displacement mechanism. The nucleophile active site attacks the C1' of nucleotide 34 to detach the guanine base from the RNA, forming a covalent enzyme-RNA intermediate. The proton acceptor active site deprotonates the incoming PreQ1, allowing a nucleophilic attack on the C1' of the ribose to form the product. After dissociation, two additional enzymatic reactions on the tRNA convert PreQ1 to queuine (Q), resulting in the hypermodified nucleoside queuosine (7-(((4,5-cis-dihydroxy-2-cyclopenten-1-yl)amino)methyl)-7-deazaguanosine). The protein is Queuine tRNA-ribosyltransferase of Aeromonas hydrophila subsp. hydrophila (strain ATCC 7966 / DSM 30187 / BCRC 13018 / CCUG 14551 / JCM 1027 / KCTC 2358 / NCIMB 9240 / NCTC 8049).